A 205-amino-acid chain; its full sequence is MHKIGLIDYGMGNIHSVTKSLESLGEEIILIKNFSESKACKAIILPGVGAFDPAMINLINTDLIIDLKNWINSGKSFLGICLGLQLLFESSDEGKVQGLGILKGKIQKIPNIVNQRIPHMGWCELLPTKTNTLLELEELNNWVYFVHSYHAIPDDFSIIAAQVNYGSEKLTAMIENDNLLACQFHPEKSGKTGEKLLRRWLSNIQ.

In terms of domain architecture, Glutamine amidotransferase type-1 spans 3–205 (KIGLIDYGMG…LLRRWLSNIQ (203 aa)). Residue Cys-81 is the Nucleophile of the active site. Active-site residues include His-185 and Glu-187.

In terms of assembly, heterodimer of HisH and HisF.

The protein localises to the cytoplasm. It carries out the reaction 5-[(5-phospho-1-deoxy-D-ribulos-1-ylimino)methylamino]-1-(5-phospho-beta-D-ribosyl)imidazole-4-carboxamide + L-glutamine = D-erythro-1-(imidazol-4-yl)glycerol 3-phosphate + 5-amino-1-(5-phospho-beta-D-ribosyl)imidazole-4-carboxamide + L-glutamate + H(+). The enzyme catalyses L-glutamine + H2O = L-glutamate + NH4(+). It participates in amino-acid biosynthesis; L-histidine biosynthesis; L-histidine from 5-phospho-alpha-D-ribose 1-diphosphate: step 5/9. Functionally, IGPS catalyzes the conversion of PRFAR and glutamine to IGP, AICAR and glutamate. The HisH subunit catalyzes the hydrolysis of glutamine to glutamate and ammonia as part of the synthesis of IGP and AICAR. The resulting ammonia molecule is channeled to the active site of HisF. The chain is Imidazole glycerol phosphate synthase subunit HisH from Prochlorococcus marinus (strain MIT 9312).